Here is a 319-residue protein sequence, read N- to C-terminus: Annexin D4 (319 aa).

2 Annexin repeats span residues 1-75 and 86-157; these read MALP…EFSR and HPWE…GLVS. Ca(2+) is bound by residues glycine 19, glycine 21, and glutamate 72. A Phosphothreonine modification is found at threonine 115. 2 positions are modified to phosphotyrosine: tyrosine 159 and tyrosine 211. 2 Annexin repeats span residues 169–240 and 241–316; these read DSAK…ICLL and KPAL…TLLS. The residue at position 277 (serine 277) is a Phosphoserine. A Phosphotyrosine modification is found at tyrosine 287.

This sequence belongs to the annexin (TC 1.A.31.1) family. In terms of tissue distribution, expressed mainly in roots and flowers. Lower in stems and leaves.

Its function is as follows. May be involved in osmotic stress and abscisic acid signaling in a calcium-dependent manner. In Arabidopsis thaliana (Mouse-ear cress), this protein is Annexin D4 (ANN4).